Consider the following 235-residue polypeptide: RAD9, HUS1, RAD1-interacting nuclear orphan protein 1 (235 aa).

Serine 50 bears the Phosphoserine mark. An RAD1-binding motif motif is present at residues 54–60; that stretch reads SWVSPQF. Disordered regions lie at residues 75–106, 111–130, and 149–198; these read HRDQ…SETL, RVQP…VPLF, and VFAP…LVKD. The span at 96–106 shows a compositional bias: polar residues; it reads ESPQSSSSETL. The D-box signature appears at 123–130; the sequence is RRPLVPLF. Residues 161–173 are compositionally biased toward basic and acidic residues; that stretch reads SVRDDPISPDQKE. A KEN box motif is present at residues 171 to 175; sequence QKENS.

Interacts (when phosphorylated by PLK1) with POLQ; promoting POLQ recruitment to DNA damage sites. Interacts with RAD1; interaction is direct and promotes association with the 9-1-1 (RAD9-RAD1-HUS1) complex. Interacts with RAD18. Interacts with TOPBP1. Interacts with UBE2N. In terms of processing, phosphorylated at Ser-50 by PLK1, promoting interaction with polymerase theta (POLQ). Post-translationally, ubiquitinated and degraded by the APC/C complex upon mitotic exit.

It is found in the nucleus. The protein resides in the chromosome. Its function is as follows. Involved in microhomology-mediated end-joining (MMEJ) DNA repair by promoting recruitment of polymerase theta (POLQ) to DNA damage sites during mitosis. MMEJ is an alternative non-homologous end-joining (NHEJ) machinery that takes place during mitosis to repair double-strand breaks in DNA that originate in S-phase. Accumulates in M-phase; following phosphorylation by PLK1, interacts with POLQ, enabling its recruitment to double-strand breaks for subsequent repair. Also involved in the DNA damage response (DDR) signaling in response to genotoxic stresses such as ionizing radiation (IR) during the S phase. Recruited to sites of DNA damage through interaction with the 9-1-1 cell-cycle checkpoint response complex and TOPBP1 in a ATR-dependent manner. Required for the progression of the G1 to S phase transition. Plays a role in the stimulation of CHEK1 phosphorylation. This chain is RAD9, HUS1, RAD1-interacting nuclear orphan protein 1 (Rhno1), found in Mus musculus (Mouse).